Reading from the N-terminus, the 456-residue chain is Gamma-glutamyl phosphate reductase (456 aa).

The protein belongs to the gamma-glutamyl phosphate reductase family.

Its subcellular location is the cytoplasm. The enzyme catalyses L-glutamate 5-semialdehyde + phosphate + NADP(+) = L-glutamyl 5-phosphate + NADPH + H(+). The protein operates within amino-acid biosynthesis; L-proline biosynthesis; L-glutamate 5-semialdehyde from L-glutamate: step 2/2. In terms of biological role, catalyzes the NADPH-dependent reduction of L-glutamate 5-phosphate into L-glutamate 5-semialdehyde and phosphate. The product spontaneously undergoes cyclization to form 1-pyrroline-5-carboxylate. The polypeptide is Gamma-glutamyl phosphate reductase (Haloquadratum walsbyi (strain DSM 16790 / HBSQ001)).